Here is a 349-residue protein sequence, read N- to C-terminus: Glycerol-3-phosphate dehydrogenase [NAD(P)+] (349 aa).

The NADPH site is built by Trp-20, Arg-43, Arg-44, and Lys-117. Residues Lys-117 and Gly-147 each coordinate sn-glycerol 3-phosphate. An NADPH-binding site is contributed by Ala-151. Lys-202, Asp-255, Ser-265, Arg-266, and Asn-267 together coordinate sn-glycerol 3-phosphate. Catalysis depends on Lys-202, which acts as the Proton acceptor. Arg-266 lines the NADPH pocket. Val-297 and Glu-299 together coordinate NADPH.

This sequence belongs to the NAD-dependent glycerol-3-phosphate dehydrogenase family.

It is found in the cytoplasm. It catalyses the reaction sn-glycerol 3-phosphate + NAD(+) = dihydroxyacetone phosphate + NADH + H(+). The enzyme catalyses sn-glycerol 3-phosphate + NADP(+) = dihydroxyacetone phosphate + NADPH + H(+). It functions in the pathway membrane lipid metabolism; glycerophospholipid metabolism. Functionally, catalyzes the reduction of the glycolytic intermediate dihydroxyacetone phosphate (DHAP) to sn-glycerol 3-phosphate (G3P), the key precursor for phospholipid synthesis. This Mycobacterium leprae (strain TN) protein is Glycerol-3-phosphate dehydrogenase [NAD(P)+].